The chain runs to 441 residues: MTKFLAGAAIVLAVAFGSFFSQSSTVTPPAPRYLPNDWDSTCTISKSGAYEVYSGDNSFSTSSADHLSALKIHPNINSTNWEQWEFDGSSQTGLSSVLLVFSRDPSYSFFGQGNLRIEFYIALPDGKRVEVLDYLEESTVVHCPGRYTAGMWNSTDRSYSFRIDDNMKNAQLSFDSAKIHGKFNVTSDTSSALADGTLWTGKDDRKGVSELSPGLFYAVPIPGGFVQMDATLESGKRLVFKGKGGSTRLWAKAGWLNLCGGWKNIRGWAGPYTVVYWELISRINKGVKYTTGLLFRDGELLVGTRNGNISQTEDYTVFEDLYGGEVKGSFADQSTGHNLKFVSPDQEKEWSFDIEHMHSFVEFRAPGEDEYGNKGLGQSGFTNRVSGGEVGEDRAYEGRGITEKCRWPKEFGKLALAIASGAGFFGPKFQMIFIKVVSYLV.

An N-terminal signal peptide occupies residues 1 to 25 (MTKFLAGAAIVLAVAFGSFFSQSST). Residues Asn77, Asn153, Asn184, and Asn308 are each glycosylated (N-linked (GlcNAc...) asparagine).

The protein belongs to the Diels-Alderase family.

It functions in the pathway mycotoxin biosynthesis. Hexane cyclase; part of the gene cluster that mediates the biosynthesis of GKK1032, fungal natural products containing a macrocyclic para-cyclophane connected to a decahydrofluorene ring system that show potent antitumor activities. Within the pathway, gkaB functions synergistically with gkaX and gkaZ to form the cyclophane. The pathway begins with the PKS-NRPS gkaA which, with the help of the trans-enoyl reductase gkaC, synthesizes the polyketide-tyrosyl acyl thioester product which can be reductively off-loaded by the terminal reductase (R) domain in gkaA. The alpha/beta hydrolase gkaG is then required to catalyze the subsequent Knoevenagel condensation that affords the 3-pyrrolin-2-one ring, whereas the three proteins gkaB, gkaX and gkaZ then function synergistically to form the cyclophane. This chain is Hexane cyclase gkaB, found in Penicillium citrinum.